A 145-amino-acid chain; its full sequence is Cell division protein SepF (145 aa).

The disordered stretch occupies residues 21-41 (DKPQESTKAKEENVKPKHETP). A compositionally biased stretch (basic and acidic residues) spans 23-41 (PQESTKAKEENVKPKHETP).

This sequence belongs to the SepF family. As to quaternary structure, homodimer. Interacts with FtsZ.

Its subcellular location is the cytoplasm. Its function is as follows. Cell division protein that is part of the divisome complex and is recruited early to the Z-ring. Probably stimulates Z-ring formation, perhaps through the cross-linking of FtsZ protofilaments. Its function overlaps with FtsA. The protein is Cell division protein SepF of Caldicellulosiruptor saccharolyticus (strain ATCC 43494 / DSM 8903 / Tp8T 6331).